The sequence spans 581 residues: Aspartate--tRNA ligase (581 aa).

Position 170 (Glu-170) interacts with L-aspartate. Positions 194 to 197 (QLFK) are aspartate. Position 216 (Arg-216) interacts with L-aspartate. ATP-binding positions include 216-218 (RDE) and Gln-225. Position 440 (His-440) interacts with L-aspartate. Residue Glu-469 coordinates ATP. Residue Arg-476 participates in L-aspartate binding. 521-524 (GFDR) lines the ATP pocket.

The protein belongs to the class-II aminoacyl-tRNA synthetase family. Type 1 subfamily. Homodimer.

It is found in the cytoplasm. The enzyme catalyses tRNA(Asp) + L-aspartate + ATP = L-aspartyl-tRNA(Asp) + AMP + diphosphate. Functionally, catalyzes the attachment of L-aspartate to tRNA(Asp) in a two-step reaction: L-aspartate is first activated by ATP to form Asp-AMP and then transferred to the acceptor end of tRNA(Asp). The polypeptide is Aspartate--tRNA ligase (Thermosipho africanus (strain TCF52B)).